Here is a 269-residue protein sequence, read N- to C-terminus: Tryptophan synthase alpha chain (269 aa).

Active-site proton acceptor residues include glutamate 49 and aspartate 60.

It belongs to the TrpA family. In terms of assembly, tetramer of two alpha and two beta chains.

The catalysed reaction is (1S,2R)-1-C-(indol-3-yl)glycerol 3-phosphate + L-serine = D-glyceraldehyde 3-phosphate + L-tryptophan + H2O. Its pathway is amino-acid biosynthesis; L-tryptophan biosynthesis; L-tryptophan from chorismate: step 5/5. Its function is as follows. The alpha subunit is responsible for the aldol cleavage of indoleglycerol phosphate to indole and glyceraldehyde 3-phosphate. This chain is Tryptophan synthase alpha chain, found in Salmonella arizonae (strain ATCC BAA-731 / CDC346-86 / RSK2980).